Here is a 518-residue protein sequence, read N- to C-terminus: D-aminopeptidase (518 aa).

Ser62 functions as the Nucleophile in the catalytic mechanism. Catalysis depends on Lys65, which acts as the Proton donor/acceptor. Residues 373–392 (FGTGPEKMDISGENEAQSSM) form a disordered region. The important for specificity stretch occupies residues 477–487 (QRSMDAPSPGE). Asp481 lines the substrate pocket.

Belongs to the peptidase S12 family. Homodimer.

It catalyses the reaction Release of an N-terminal D-amino acid from a peptide, Xaa-|-Yaa-, in which Xaa is preferably D-Ala, D-Ser or D-Thr. D-amino acid amides and methyl esters also are hydrolyzed, as is glycine amide.. Its activity is regulated as follows. Inhibited by beta-lactam compounds such as 6-aminopenicillic acid, 7-aminocephalosporanic acid, benzylpenicillin and ampicillin. Inhibited by p-chloromercuribenzoate. Hydrolyzes N-terminal residues in D-amino acid-containing peptides. This chain is D-aminopeptidase, found in Brucella melitensis biotype 2 (strain ATCC 23457).